The following is a 340-amino-acid chain: 4-hydroxythreonine-4-phosphate dehydrogenase (340 aa).

Thr135 provides a ligand contact to substrate. A divalent metal cation is bound by residues His170, His215, and His276. The substrate site is built by Lys284, Asn293, and Arg302.

It belongs to the PdxA family. In terms of assembly, homodimer. Requires a divalent metal cation as cofactor.

It localises to the cytoplasm. It carries out the reaction 4-(phosphooxy)-L-threonine + NAD(+) = 3-amino-2-oxopropyl phosphate + CO2 + NADH. Its pathway is cofactor biosynthesis; pyridoxine 5'-phosphate biosynthesis; pyridoxine 5'-phosphate from D-erythrose 4-phosphate: step 4/5. Catalyzes the NAD(P)-dependent oxidation of 4-(phosphooxy)-L-threonine (HTP) into 2-amino-3-oxo-4-(phosphooxy)butyric acid which spontaneously decarboxylates to form 3-amino-2-oxopropyl phosphate (AHAP). This chain is 4-hydroxythreonine-4-phosphate dehydrogenase, found in Synechococcus sp. (strain JA-2-3B'a(2-13)) (Cyanobacteria bacterium Yellowstone B-Prime).